Reading from the N-terminus, the 97-residue chain is ESAT-6-like protein EsxA (97 aa).

Belongs to the WXG100 family. ESAT-6 subfamily. As to quaternary structure, forms a tight 1:1 complex with EsxB. Forms a complex with EccC and EsxB, probably wholly mediated by EsxB.

The protein resides in the secreted. In terms of biological role, may help regulate assembly and function of the type VII secretion system (T7SS). EsxA disassembles pre-formed EccC-EsxB multimers, possibly by making EccC-EsxA-EsxB trimers instead of EccC-EsxB-EsxB-EccC tetramers. The protein is ESAT-6-like protein EsxA of Thermomonospora curvata (strain ATCC 19995 / DSM 43183 / JCM 3096 / KCTC 9072 / NBRC 15933 / NCIMB 10081 / Henssen B9).